The sequence spans 609 residues: Glutamine--fructose-6-phosphate aminotransferase [isomerizing] (609 aa).

The active-site Nucleophile; for GATase activity is the cysteine 2. Residues 2–219 form the Glutamine amidotransferase type-2 domain; that stretch reads CGIFGYLGSK…SGELAIVGLG (218 aa). SIS domains follow at residues 280–426 and 458–599; these read ISEK…SKHT and WAHT…IDCP. The active-site For Fru-6P isomerization activity is the lysine 604.

Homodimer.

Its subcellular location is the cytoplasm. The catalysed reaction is D-fructose 6-phosphate + L-glutamine = D-glucosamine 6-phosphate + L-glutamate. In terms of biological role, catalyzes the first step in hexosamine metabolism, converting fructose-6P into glucosamine-6P using glutamine as a nitrogen source. This chain is Glutamine--fructose-6-phosphate aminotransferase [isomerizing], found in Chlamydia abortus (strain DSM 27085 / S26/3) (Chlamydophila abortus).